A 369-amino-acid polypeptide reads, in one-letter code: Queuine tRNA-ribosyltransferase (369 aa).

The active-site Proton acceptor is the aspartate 89. Residues 89–93 (DSGGF), aspartate 142, glutamine 184, and glycine 211 contribute to the substrate site. The segment at 242 to 248 (GGGSPEL) is RNA binding. Aspartate 261 functions as the Nucleophile in the catalytic mechanism. Residues 266 to 270 (TRIAR) form an RNA binding; important for wobble base 34 recognition region. Residues cysteine 299, cysteine 301, cysteine 304, and histidine 330 each coordinate Zn(2+).

The protein belongs to the queuine tRNA-ribosyltransferase family. In terms of assembly, homodimer. Within each dimer, one monomer is responsible for RNA recognition and catalysis, while the other monomer binds to the replacement base PreQ1. The cofactor is Zn(2+).

It carries out the reaction 7-aminomethyl-7-carbaguanine + guanosine(34) in tRNA = 7-aminomethyl-7-carbaguanosine(34) in tRNA + guanine. The protein operates within tRNA modification; tRNA-queuosine biosynthesis. Its function is as follows. Catalyzes the base-exchange of a guanine (G) residue with the queuine precursor 7-aminomethyl-7-deazaguanine (PreQ1) at position 34 (anticodon wobble position) in tRNAs with GU(N) anticodons (tRNA-Asp, -Asn, -His and -Tyr). Catalysis occurs through a double-displacement mechanism. The nucleophile active site attacks the C1' of nucleotide 34 to detach the guanine base from the RNA, forming a covalent enzyme-RNA intermediate. The proton acceptor active site deprotonates the incoming PreQ1, allowing a nucleophilic attack on the C1' of the ribose to form the product. After dissociation, two additional enzymatic reactions on the tRNA convert PreQ1 to queuine (Q), resulting in the hypermodified nucleoside queuosine (7-(((4,5-cis-dihydroxy-2-cyclopenten-1-yl)amino)methyl)-7-deazaguanosine). This Thermotoga maritima (strain ATCC 43589 / DSM 3109 / JCM 10099 / NBRC 100826 / MSB8) protein is Queuine tRNA-ribosyltransferase.